The primary structure comprises 992 residues: Leucine-rich repeat receptor-like serine/threonine-protein kinase BAM3 (992 aa).

The signal sequence occupies residues 1-21 (MADKIFTFFLILSSISPLLCS). Residues 22–656 (SLISPLNLSL…ARSRGEISAK (635 aa)) are Extracellular-facing. The N-linked (GlcNAc...) asparagine glycan is linked to N28. C64 and C71 form a disulfide bridge. N75 and N87 each carry an N-linked (GlcNAc...) asparagine glycan. 6 LRR repeats span residues 75–99 (NQSITRLDLSNLNISGTISPEISRL), 100–124 (SPSLVFLDISSNSFSGELPKEIYEL), 126–148 (GLEVLNISSNVFEGELETRGFSQ), 150–173 (TQLVTLDAYDNSFNGSLPLSLTTL), 174–199 (TRLEHLDLGGNYFDGEIPRSYGSFLS), and 201–221 (KFLSLSGNDLRGRIPNELANI). N-linked (GlcNAc...) asparagine glycosylation is found at N131 and N163. A glycan (N-linked (GlcNAc...) asparagine) is linked at N220. The CLE45 peptide binding signature appears at 226–231 (QLYLGY). LRR repeat units follow at residues 246 to 270 (LINLVHLDLANCSLKGSIPAELGNL), 271 to 294 (KNLEVLFLQTNELTGSVPRELGNM), 296 to 320 (SLKTLDLSNNFLEGEIPLELSGLQK), 322 to 342 (QLFNLFFNRLHGEIPEFVSEL), 343 to 366 (PDLQILKLWHNNFTGKIPSKLGSN), 368 to 391 (NLIEIDLSTNKLTGLIPESLCFGR), 393 to 414 (LKILILFNNFLFGPLPEDLGQC), 415 to 438 (EPLWRFRLGQNFLTSKLPKGLIYL), 439 to 462 (PNLSLLELQNNFLTGEIPEEEAGN), 465 to 489 (FSSLTQINLSNNRLSGPIPGSIRNL), 491 to 513 (SLQILLLGANRLSGQIPGEIGSL), 514 to 536 (KSLLKIDMSRNNFSGKFPPEFGD), 537 to 561 (CMSLTYLDLSHNQISGQIPVQISQI), 563 to 585 (ILNYLNVSWNSFNQSLPNELGYM), and 586 to 610 (KSLTSADFSHNNFSGSVPTSGQFSY). N-linked (GlcNAc...) asparagine glycosylation is found at N256 and N293. Residue N354 is glycosylated (N-linked (GlcNAc...) asparagine). N-linked (GlcNAc...) asparagine glycosylation is found at N440 and N472. N-linked (GlcNAc...) asparagine glycosylation occurs at N525. N-linked (GlcNAc...) asparagine glycans are attached at residues N568, N575, N597, N613, N631, and N635. Residues 657-677 (FKLFFGLGLLGFFLVFVVLAV) traverse the membrane as a helical segment. Residues 678-992 (VKNRRMRKNN…ISQAKQPNTF (315 aa)) lie on the Cytoplasmic side of the membrane. Residues 710–992 (VKENHVIGKG…ISQAKQPNTF (283 aa)) enclose the Protein kinase domain. ATP contacts are provided by residues 716-724 (IGKGGRGIV) and K738. D836 (proton acceptor) is an active-site residue.

The protein belongs to the protein kinase superfamily. Ser/Thr protein kinase family. In terms of assembly, interacts with CLE45, especially in roots. Binds to the dimer CLV2/CRN. Expressed in seedlings, roots, leaves, stems, inflorescences, flowers and siliques. In roots, confined to protophloem and sieve element precursor cells.

Its subcellular location is the cell membrane. It is found in the endoplasmic reticulum membrane. The enzyme catalyses L-seryl-[protein] + ATP = O-phospho-L-seryl-[protein] + ADP + H(+). It catalyses the reaction L-threonyl-[protein] + ATP = O-phospho-L-threonyl-[protein] + ADP + H(+). Functionally, necessary for male gametophyte development, as well as ovule specification and function. Required for the development of high-ordered vascular strands within the leaf and a correlated control of leaf shape, size and symmetry. LRR-rich receptor-like kinase (LRR-RLK) involved in the perception of CLE45 peptide ligand which mediates root growth inhibition by repressing protophloem differentiation; this mechanism requires CRN. BRX, BAM3, and CLE45 act together to regulate the transition of protophloem cells from proliferation to differentiation, thus impinging on postembryonic growth capacity of the root meristem. Necessary for CLE45 peptide-triggered accumulation of MAKR5 in developing sieve elements. The protein is Leucine-rich repeat receptor-like serine/threonine-protein kinase BAM3 of Arabidopsis thaliana (Mouse-ear cress).